The sequence spans 398 residues: Enoyl-[acyl-carrier-protein] reductase [NADH] (398 aa).

NAD(+)-binding positions include 48–53 (GSSTGY), 74–75 (FE), 111–112 (DA), and 139–140 (LA). Residue Tyr-225 participates in substrate binding. The Proton donor role is filled by Tyr-235. NAD(+) is bound by residues Lys-244 and 273-275 (VVT).

This sequence belongs to the TER reductase family. Monomer.

It carries out the reaction a 2,3-saturated acyl-[ACP] + NAD(+) = a (2E)-enoyl-[ACP] + NADH + H(+). It functions in the pathway lipid metabolism; fatty acid biosynthesis. Its function is as follows. Involved in the final reduction of the elongation cycle of fatty acid synthesis (FAS II). Catalyzes the reduction of a carbon-carbon double bond in an enoyl moiety that is covalently linked to an acyl carrier protein (ACP). The polypeptide is Enoyl-[acyl-carrier-protein] reductase [NADH] (Pseudomonas aeruginosa (strain UCBPP-PA14)).